The primary structure comprises 530 residues: Bifunctional purine biosynthesis protein PurH (530 aa).

In terms of domain architecture, MGS-like spans 1 to 148; that stretch reads MNNARPIRRA…KNHKDVTIVV (148 aa).

It belongs to the PurH family.

It carries out the reaction (6R)-10-formyltetrahydrofolate + 5-amino-1-(5-phospho-beta-D-ribosyl)imidazole-4-carboxamide = 5-formamido-1-(5-phospho-D-ribosyl)imidazole-4-carboxamide + (6S)-5,6,7,8-tetrahydrofolate. The catalysed reaction is IMP + H2O = 5-formamido-1-(5-phospho-D-ribosyl)imidazole-4-carboxamide. The protein operates within purine metabolism; IMP biosynthesis via de novo pathway; 5-formamido-1-(5-phospho-D-ribosyl)imidazole-4-carboxamide from 5-amino-1-(5-phospho-D-ribosyl)imidazole-4-carboxamide (10-formyl THF route): step 1/1. Its pathway is purine metabolism; IMP biosynthesis via de novo pathway; IMP from 5-formamido-1-(5-phospho-D-ribosyl)imidazole-4-carboxamide: step 1/1. In Aliivibrio fischeri (strain MJ11) (Vibrio fischeri), this protein is Bifunctional purine biosynthesis protein PurH.